The following is a 94-amino-acid chain: Exodeoxyribonuclease 7 small subunit (94 aa).

The segment at 1–21 is disordered; sequence MPRAPNDAPSASATPSATPAS.

Belongs to the XseB family. As to quaternary structure, heterooligomer composed of large and small subunits.

Its subcellular location is the cytoplasm. The enzyme catalyses Exonucleolytic cleavage in either 5'- to 3'- or 3'- to 5'-direction to yield nucleoside 5'-phosphates.. Bidirectionally degrades single-stranded DNA into large acid-insoluble oligonucleotides, which are then degraded further into small acid-soluble oligonucleotides. This Ralstonia pickettii (strain 12J) protein is Exodeoxyribonuclease 7 small subunit.